A 172-amino-acid polypeptide reads, in one-letter code: DCC family protein At1g52590, chloroplastic (172 aa).

The transit peptide at 1–25 (MAILIPASFGRLTITSRAQVRVRVS) directs the protein to the chloroplast.

The protein belongs to the DCC thiol-disulfide oxidoreductase family.

Its subcellular location is the plastid. The protein resides in the chloroplast. This is DCC family protein At1g52590, chloroplastic from Arabidopsis thaliana (Mouse-ear cress).